Consider the following 238-residue polypeptide: Orotidine 5'-phosphate decarboxylase (238 aa).

Substrate-binding positions include Asp-10, Lys-32, 59 to 68 (DLKLHDIPNT), Thr-122, Arg-184, Gln-193, Gly-213, and Arg-214. The active-site Proton donor is the Lys-61.

The protein belongs to the OMP decarboxylase family. Type 1 subfamily. Homodimer.

The catalysed reaction is orotidine 5'-phosphate + H(+) = UMP + CO2. It participates in pyrimidine metabolism; UMP biosynthesis via de novo pathway; UMP from orotate: step 2/2. Its function is as follows. Catalyzes the decarboxylation of orotidine 5'-monophosphate (OMP) to uridine 5'-monophosphate (UMP). This is Orotidine 5'-phosphate decarboxylase from Bacillus cereus (strain B4264).